The primary structure comprises 980 residues: Protein translocase subunit SecA (980 aa).

ATP contacts are provided by residues Gln-109, 127 to 131, and Asp-529; that span reads GEGKT. The segment at 954 to 980 is disordered; the sequence is QKIGRNDPCPCGSGKKYKHCHGKDNPQ. Zn(2+)-binding residues include Cys-962, Cys-964, Cys-973, and His-974.

It belongs to the SecA family. Monomer and homodimer. Part of the essential Sec protein translocation apparatus which comprises SecA, SecYEG and auxiliary proteins SecDF. Other proteins may also be involved. It depends on Zn(2+) as a cofactor.

The protein localises to the cell inner membrane. The protein resides in the cytoplasm. The catalysed reaction is ATP + H2O + cellular proteinSide 1 = ADP + phosphate + cellular proteinSide 2.. Functionally, part of the Sec protein translocase complex. Interacts with the SecYEG preprotein conducting channel. Has a central role in coupling the hydrolysis of ATP to the transfer of proteins into and across the cell membrane, serving as an ATP-driven molecular motor driving the stepwise translocation of polypeptide chains across the membrane. This Brachyspira hyodysenteriae (strain ATCC 49526 / WA1) protein is Protein translocase subunit SecA.